The following is a 185-amino-acid chain: Putative manganese efflux pump MntP (185 aa).

The next 6 membrane-spanning stretches (helical) occupy residues 3 to 23 (IFTLLMIAAGLSMDNFAVSLA), 40 to 60 (LLFVAAHLVMFSLGWFGVSVI), 64 to 84 (FDAYDHWISFGLLVFIGLRMI), 102 to 122 (TFSRLLLIALATSMDALAVGI), 124 to 144 (LSLAGVHFVLSVAAISFFVLI), and 165 to 185 (EIFGGIVLIGIALKILLDAMM).

Belongs to the MntP (TC 9.B.29) family.

It is found in the cell inner membrane. Probably functions as a manganese efflux pump. This is Putative manganese efflux pump MntP from Elusimicrobium minutum (strain Pei191).